A 412-amino-acid chain; its full sequence is MSRHLWKNQLSEMVQPSGGPAEDQDMLGEESSLGKPAMLHLPSEQGTPETLQRCLEENQELRDAIRQSNQMLRERCEELLHFQVSQREEKEFLMCKFQEARKLVERLSLEKLDLRRQREQALEDLEHLKKCQQQMAEDKASVKAQVTSLLGELQESQSRLEAATKERQTLEGRIRAVSEQVRQLESEREVLQQQHSVQVDQLRMQNQSVEAALRMERQAASEEKRKLAQLQAAYHQLFQDYDSHIKSSKGMQLEDLRQQLQQAEEALVAKQELIDKLKEEAEQHKIVMETVPVLKAQADIYKADFQAERHAREKLVERKELLQEQLEQLQREFNKLKVGCHESARIEDMRKRHVETSQPPLLPAPAHHSFHLALSNQRRSPPEEPPDFCCPKCQYQAPDMDTLQIHVMECIE.

Residues 1 to 48 (MSRHLWKNQLSEMVQPSGGPAEDQDMLGEESSLGKPAMLHLPSEQGTP) are disordered. Residues 1–197 (MSRHLWKNQL…REVLQQQHSV (197 aa)) form a required for interaction with and ubiquitination by MARCHF2 region. 2 positions are modified to phosphoserine; by IKKB: S31 and S43. The segment at 44–111 (EQGTPETLQR…KLVERLSLEK (68 aa)) is interaction with CHUK/IKBKB. Residues 49-343 (ETLQRCLEEN…NKLKVGCHES (295 aa)) are a coiled coil. S68 bears the Phosphoserine mark. Residue S85 is modified to Phosphoserine; by ATM. Glycyl lysine isopeptide (Lys-Gly) (interchain with G-Cter in ubiquitin) cross-links involve residues K111, K139, K143, K226, and K246. The tract at residues 150–250 (LGELQESQSR…YDSHIKSSKG (101 aa)) is interaction with TANK. The tract at residues 242–343 (DSHIKSSKGM…NKLKVGCHES (102 aa)) is ubiquitin-binding (UBAN). A self-association region spans residues 246-358 (KSSKGMQLED…MRKRHVETSQ (113 aa)). The interval 249 to 412 (KGMQLEDLRQ…LQIHVMECIE (164 aa)) is required for interaction with TNFAIP3. A Glycyl lysine isopeptide (Lys-Gly) (interchain with G-Cter in SUMO); alternate cross-link involves residue K270. K270 is covalently cross-linked (Glycyl lysine isopeptide (Lys-Gly) (interchain with G-Cter in ubiquitin); alternate). Glycyl lysine isopeptide (Lys-Gly) (interchain with G-Cter in ubiquitin) cross-links involve residues K276, K278, K285, and K295. Residue K302 forms a Glycyl lysine isopeptide (Lys-Gly) (interchain with G-Cter in SUMO); alternate linkage. Residue K302 forms a Glycyl lysine isopeptide (Lys-Gly) (interchain with G-Cter in ubiquitin); alternate linkage. Glycyl lysine isopeptide (Lys-Gly) (interchain with G-Cter in ubiquitin) cross-links involve residues K314 and K319. The segment at 315–336 (LVERKELLQEQLEQLQREFNKL) is leucine-zipper. S369 is modified (phosphoserine; by IKKB). The tract at residues 375 to 412 (SNQRRSPPEEPPDFCCPKCQYQAPDMDTLQIHVMECIE) is interaction with CYLD. S380 carries the post-translational modification Phosphoserine. The CCHC NOA-type zinc-finger motif lies at 382 to 412 (PEEPPDFCCPKCQYQAPDMDTLQIHVMECIE). Position 390 (C390) interacts with Zn(2+). Residue K392 forms a Glycyl lysine isopeptide (Lys-Gly) (interchain with G-Cter in ubiquitin) linkage. Residues C393, H406, and C410 each contribute to the Zn(2+) site.

Homodimer; disulfide-linked. Component of the I-kappa-B-kinase (IKK) core complex consisting of CHUK, IKBKB and IKBKG; probably four alpha/CHUK-beta/IKBKB dimers are associated with four gamma/IKBKG subunits. The IKK core complex seems to associate with regulatory or adapter proteins to form a IKK-signalosome holo-complex. The IKK complex associates with TERF2IP/RAP1, leading to promote IKK-mediated phosphorylation of RELA/p65. Part of a complex composed of NCOA2, NCOA3, CHUK/IKKA, IKBKB, IKBKG and CREBBP. Interacts with COPS3, CYLD, NALP2, TRPC4AP and PIDD1. Interacts with ATM; the complex is exported from the nucleus. Interacts with TRAF6. Interacts with IKBKE. Interacts with TANK; the interaction is enhanced by IKBKE and TBK1. Part of a ternary complex consisting of TANK, IKBKB and IKBKG. Interacts with ZFAND5. Interacts with RIPK2. Interacts with TNIP1 and TNFAIP3; TNIP1 facilitates the TNFAIP3-mediated de-ubiquitination of IKBKG. Interacts with TNFAIP3; the interaction is induced by TNF stimulation and by polyubiquitin. Binds (via UBAN region) polyubiquitin; binds both 'Lys-63'-linked and linear polyubiquitin, with higher affinity for linear ubiquitin. Interacts with NLRP10. Interacts with TANK; this interaction increases in response to DNA damage. Interacts with USP10; this interaction increases in response to DNA damage. Interacts with ZC3H12A; this interaction increases in response to DNA damage. Interacts with IFIT5; the interaction synergizes the recruitment of IKK to MAP3K7 and enhances IKK phosphorylation. Interacts with TRIM29; this interaction induces IKBKG/NEMO ubiquitination and proteolytic degradation. Interacts with TRIM13; this interaction leads to IKBKG/NEMO ubiquitination. Interacts with ARFIP2. Interacts with RIPK1. Interacts with (ubiquitinated) BCL10; interaction with polyubiquitinated BCL10 via both 'Lys-63'-linked and linear ubiquitin is required for TCR-induced NF-kappa-B activation. Interacts with MARCHF2; during the late stages of macrophage viral and bacterial infection; the interaction leads to ubiquitination and degradation of IKBKG/NEMO. In terms of processing, phosphorylation at Ser-68 attenuates aminoterminal homodimerization. Polyubiquitinated on Lys-278 via 'Lys-63'-linked ubiquitin; the ubiquitination is mediated downstream of NOD2 and RIPK2 and probably plays a role in signaling by facilitating interactions with ubiquitin domain-containing proteins and activates the NF-kappa-B pathway. Polyubiquitinated on Lys-278 and Lys-302 through 'Lys-63'-linked ubiquitin; the ubiquitination is mediated by BCL10, MALT1 and TRAF6 and probably plays a role in signaling by facilitating interactions with ubiquitin domain-containing proteins and activates the NF-kappa-B pathway. Monoubiquitinated on Lys-270 and Lys-302; promotes nuclear export. Polyubiquitinated through 'Lys-27' by TRIM23; involved in antiviral innate and inflammatory responses. Linear polyubiquitinated on Lys-111, Lys-143, Lys-226, Lys-246, Lys-270, Lys-278, Lys-285, Lys-295, Lys-302 and Lys-319; the head-to-tail polyubiquitination is mediated by the LUBAC complex and plays a key role in NF-kappa-B activation. Deubiquitinated by USP10 in a TANK-dependent and -independent manner, leading to the negative regulation of NF-kappa-B signaling upon DNA damage. Ubiquitinated at Lys-319 by MARCHF2 following bacterial and viral infection which leads to its degradation. Polyubiquitinated via 'Lys-29'-linked ubiquitin; leading to lysosomal degradation. Post-translationally, sumoylated on Lys-270 and Lys-302 with SUMO1; the modification results in phosphorylation of Ser-85 by ATM leading to a replacement of the sumoylation by mono-ubiquitination on these residues. In terms of processing, neddylated by TRIM40, resulting in stabilization of NFKBIA and down-regulation of NF-kappa-B activity.

It localises to the cytoplasm. The protein resides in the nucleus. Functionally, regulatory subunit of the IKK core complex which phosphorylates inhibitors of NF-kappa-B thus leading to the dissociation of the inhibitor/NF-kappa-B complex and ultimately the degradation of the inhibitor. Its binding to scaffolding polyubiquitin plays a key role in IKK activation by multiple signaling receptor pathways. Can recognize and bind both 'Lys-63'-linked and linear polyubiquitin upon cell stimulation, with a much highr affinity for linear polyubiquitin. Could be implicated in NF-kappa-B-mediated protection from cytokine toxicity. Essential for viral activation of IRF3. Involved in TLR3- and IFIH1-mediated antiviral innate response; this function requires 'Lys-27'-linked polyubiquitination. This is NF-kappa-B essential modulator (Ikbkg) from Rattus norvegicus (Rat).